A 270-amino-acid chain; its full sequence is Urease accessory protein UreD (270 aa).

The protein belongs to the UreD family. UreD, UreF and UreG form a complex that acts as a GTP-hydrolysis-dependent molecular chaperone, activating the urease apoprotein by helping to assemble the nickel containing metallocenter of UreC. The UreE protein probably delivers the nickel.

The protein localises to the cytoplasm. Its function is as follows. Required for maturation of urease via the functional incorporation of the urease nickel metallocenter. This Beijerinckia indica subsp. indica (strain ATCC 9039 / DSM 1715 / NCIMB 8712) protein is Urease accessory protein UreD.